Reading from the N-terminus, the 402-residue chain is Queuine tRNA-ribosyltransferase-like protein (402 aa).

The protein belongs to the queuine tRNA-ribosyltransferase family.

In Theileria annulata, this protein is Queuine tRNA-ribosyltransferase-like protein.